A 224-amino-acid polypeptide reads, in one-letter code: Heme response regulator HssR (224 aa).

A Response regulatory domain is found at 3–116 (QCLVVDDDPR…ELIFRIRAVL (114 aa)). Aspartate 52 carries the 4-aspartylphosphate modification. Residues 124–222 (NSEMTIGNLT…VRGQGYKVEN (99 aa)) constitute a DNA-binding region (ompR/PhoB-type).

In terms of processing, phosphorylated by HssS.

It is found in the cytoplasm. Member of the two-component regulatory system HssS/HssR involved in intracellular heme homeostasis and tempering of staphylococcal virulence. Phosphorylated HssR binds to a direct repeat sequence within hrtAB promoter and activates the expression of hrtAB, an efflux pump, in response to extracellular heme, hemin, hemoglobin or blood. This is Heme response regulator HssR (hssR) from Staphylococcus aureus (strain Mu50 / ATCC 700699).